The primary structure comprises 120 residues: Large ribosomal subunit protein eL34 (120 aa).

The protein belongs to the eukaryotic ribosomal protein eL34 family.

This is Large ribosomal subunit protein eL34 (RPL34) from Nicotiana tabacum (Common tobacco).